The sequence spans 267 residues: Hydroxyethylthiazole kinase (267 aa).

A substrate-binding site is contributed by Met46. Residues Arg122 and Ser168 each coordinate ATP. Gly195 contributes to the substrate binding site.

This sequence belongs to the Thz kinase family. Requires Mg(2+) as cofactor.

The catalysed reaction is 5-(2-hydroxyethyl)-4-methylthiazole + ATP = 4-methyl-5-(2-phosphooxyethyl)-thiazole + ADP + H(+). It participates in cofactor biosynthesis; thiamine diphosphate biosynthesis; 4-methyl-5-(2-phosphoethyl)-thiazole from 5-(2-hydroxyethyl)-4-methylthiazole: step 1/1. Functionally, catalyzes the phosphorylation of the hydroxyl group of 4-methyl-5-beta-hydroxyethylthiazole (THZ). The chain is Hydroxyethylthiazole kinase from Nitratidesulfovibrio vulgaris (strain ATCC 29579 / DSM 644 / CCUG 34227 / NCIMB 8303 / VKM B-1760 / Hildenborough) (Desulfovibrio vulgaris).